A 160-amino-acid chain; its full sequence is Protein CrtK (160 aa).

The next 5 membrane-spanning stretches (helical) occupy residues 3–23, 37–57, 76–96, 101–121, and 129–149; these read LTLFAVYFVACACAGATGAIF, WVPPNWLFPVAWSTLYILMSI, LAFWAVQIAVNTLWTPIFFGL, GGMLVLVLLWLSVFATCVLFW, and LMFVPYVIWVTVAGALNFSVW.

The protein belongs to the TspO/BZRP family.

The protein resides in the cell inner membrane. The protein operates within carotenoid biosynthesis; spheroidene biosynthesis. The polypeptide is Protein CrtK (crtK) (Rhodobacter capsulatus (strain ATCC BAA-309 / NBRC 16581 / SB1003)).